A 659-amino-acid chain; its full sequence is Cyclic-di-AMP phosphodiesterase GdpP (659 aa).

Residues 1 to 8 are Cytoplasmic-facing; the sequence is MPSFYEKP. A run of 2 helical transmembrane segments spans residues 9 to 29 and 30 to 50; these read LFRY…LISF and YFNW…LFFI. Residues 51–659 are Cytoplasmic-facing; sequence KRADSLIRQE…DEYFEGGVQR (609 aa). Residues 84–149 form a PAS-like domain, required for heme-binding region; sequence PIGIMLFNDQ…NDRKFRVVIK (66 aa). A GGDEF domain is found at 173–301; the sequence is ERTVLAYIFL…GGDQVAIKLP (129 aa). Residues 339-496 form a DHH domain region; it reads NVIIMGHKFP…IEATALLAGI (158 aa). His-345, Asp-349, Asp-351, Asp-420, His-444, and Asp-499 together coordinate Mn(2+). Residues 591–646 form a DHHA1 domain region; sequence FAVARRDEQTVCISARSLGEVNVQIIMEALEGGGHLTNAATQLSGISVSEALERLK.

This sequence belongs to the GdpP/PdeA phosphodiesterase family. Heme b is required as a cofactor. Mg(2+) serves as cofactor. The cofactor is Mn(2+).

It is found in the cell membrane. The catalysed reaction is 3',3'-c-di-AMP + H2O = 5'-O-phosphonoadenylyl-(3'-&gt;5')-adenosine + H(+). Its activity is regulated as follows. Phosphodiesterase (PDE) inhibited by Zn(2+), Ca(2+) inhibits in the presence of Mg(2+) but not Mn(2+); c-di-AMP PDE activity is competitively inhibited by ppGpp. Heme binding (by Fe(2+) or Fe(3+) heme) inhibits PDE, activity is partially restored by KCN or NO only for Fe(2+) heme. Binding of NO to Fe(2+) heme switches from hexa- to pentacoordination. Heme binding inhibits the ATPase activity. Functionally, has phosphodiesterase (PDE) activity against cyclic-di-AMP (c-di-AMP) and to a much lesser extent against cyclic-di-GMP (c-di-GMP) in the DHH/DHHA1 domains. Also has ATPase activity, probably via the GGDEF domain. Overexpression leads to increased sensitivity to methyl methanesulfonate (MMS) and H(2)O(2). Overexpression leads to extreme sensitivity to the beta-lactam antibiotic cefuroxime (CEF), probably dependent on PDE activity. May monitor cellular heme or NO levels. In B.subtilis c-di-AMP is a second messenger that mediates growth, DNA repair and cell wall homeostasis; it is toxic when present in excess. The sequence is that of Cyclic-di-AMP phosphodiesterase GdpP from Bacillus subtilis (strain 168).